Here is a 97-residue protein sequence, read N- to C-terminus: DNA-binding protein NEQ150 (97 aa).

This sequence belongs to the PDCD5 family.

The sequence is that of DNA-binding protein NEQ150 from Nanoarchaeum equitans (strain Kin4-M).